The following is a 95-amino-acid chain: Aspartyl/glutamyl-tRNA(Asn/Gln) amidotransferase subunit C (95 aa).

The protein belongs to the GatC family. Heterotrimer of A, B and C subunits.

It catalyses the reaction L-glutamyl-tRNA(Gln) + L-glutamine + ATP + H2O = L-glutaminyl-tRNA(Gln) + L-glutamate + ADP + phosphate + H(+). The enzyme catalyses L-aspartyl-tRNA(Asn) + L-glutamine + ATP + H2O = L-asparaginyl-tRNA(Asn) + L-glutamate + ADP + phosphate + 2 H(+). Allows the formation of correctly charged Asn-tRNA(Asn) or Gln-tRNA(Gln) through the transamidation of misacylated Asp-tRNA(Asn) or Glu-tRNA(Gln) in organisms which lack either or both of asparaginyl-tRNA or glutaminyl-tRNA synthetases. The reaction takes place in the presence of glutamine and ATP through an activated phospho-Asp-tRNA(Asn) or phospho-Glu-tRNA(Gln). The polypeptide is Aspartyl/glutamyl-tRNA(Asn/Gln) amidotransferase subunit C (Chlorobaculum parvum (strain DSM 263 / NCIMB 8327) (Chlorobium vibrioforme subsp. thiosulfatophilum)).